The following is a 382-amino-acid chain: Galactokinase (382 aa).

34–37 (EHTD) is a substrate binding site. 124 to 130 (GAGLSSS) contributes to the ATP binding site. Ser-130 and Glu-162 together coordinate Mg(2+). Asp-174 (proton acceptor) is an active-site residue. Tyr-223 provides a ligand contact to substrate.

This sequence belongs to the GHMP kinase family. GalK subfamily.

Its subcellular location is the cytoplasm. It carries out the reaction alpha-D-galactose + ATP = alpha-D-galactose 1-phosphate + ADP + H(+). The protein operates within carbohydrate metabolism; galactose metabolism. Functionally, catalyzes the transfer of the gamma-phosphate of ATP to D-galactose to form alpha-D-galactose-1-phosphate (Gal-1-P). The chain is Galactokinase from Salmonella gallinarum (strain 287/91 / NCTC 13346).